The following is a 134-amino-acid chain: Probable histone H2A.3 (134 aa).

It belongs to the histone H2A family. As to quaternary structure, the nucleosome is a histone octamer containing two molecules each of H2A, H2B, H3 and H4 assembled in one H3-H4 heterotetramer and two H2A-H2B heterodimers. The octamer wraps approximately 147 bp of DNA.

Its subcellular location is the nucleus. The protein resides in the chromosome. In terms of biological role, core component of nucleosome. Nucleosomes wrap and compact DNA into chromatin, limiting DNA accessibility to the cellular machineries which require DNA as a template. Histones thereby play a central role in transcription regulation, DNA repair, DNA replication and chromosomal stability. DNA accessibility is regulated via a complex set of post-translational modifications of histones, also called histone code, and nucleosome remodeling. The sequence is that of Probable histone H2A.3 from Oryza sativa subsp. indica (Rice).